A 1051-amino-acid polypeptide reads, in one-letter code: MRETPKKVLVIGSGPIKIAEAAEFDYSGSQALKALKEEGIETVLVNSNVATVQTSKKFADKLYMLPVVWWAVEKVIEKERPDGIMIGFGGQTALNVGVDLHKKGVLQKYNVKVLGTQIDGIEKALSREKFRETMIENNLPVPPSLSARSEEEAIKNAKIVGYPVMVRVSFNLGGRGSMVAWTEEDLKKNIRRALSQSYIGEVLLEKYLYHWIELEYEVMRDKKGNSAVIACIENLDPMGVHTGESTVVAPCQTLDNLEYQNMRTYTIEVARSINLIGECNVQFALNPRGYEYYIIETNPRMSRSSALASKATGYPLAYVSAKLALGYELHEVINKVSGRTCACFEPSLDYIVTKIPRWDLSKFENVDQSLATEMMSVGEVMSIGRSFEESLQKAIRMLDIGEPGVVGGKVYESNMSKEEALKYLKERRPYWFLYAAKAFKEGATINEVYEVTGINEFFLNKIKGLVDFYETLRKLKEIDKETLKLAKKLGFSDEQISKALNKSTEYVRKIRYETNTIPVVKLIDTLAGEWPAVTNYMYLTYNGTEDDIEFSQGNKLLIIGAGGFRIGVSVEFDWSVVSLMEAGSKYFDEVAVLNYNPETVSTDWDIARKLYFDEISVERVLDLIKKEKFRYVATFSGGQIGNSIAKELEENGVRLLGTSGSSVDIAENREKFSKLLDKLGISQPDWISATSLGEIKKFANEVGFPVLVRPSYVLSGSSMKIAYSEEELYEYVRRATEISPKYPVVISKYIENAIEAEIDGVSDGNKVLGITLEHIEEAGVHSGDATMSIPFRKLSENNVNRMRENVLNIARELNIKGPFNVQFVVKENTPYIIELNLRASRSMPFSSKAKGINLINESMKAIFDGLDFSEDYYEPPSKYWAVKSAQFSWSQLRGAYPFLGPEMKSTGEAASFGVTFYDALLKSWLSSMPNRIPNKNGIALVYGNKNLDYLKDTADNLTRFGLTVYSISELPLQDIETIDKMKAEELVRAKKVEIIVTDGYLKKFDYNIRRTAVDYNIPIILNGRLGYEVSKAFLNYDSLTFFEISEYGGGI.

A carboxyphosphate synthetic domain region spans residues 1-399 (MRETPKKVLV…SLQKAIRMLD (399 aa)). The ATP site is built by arginine 127, arginine 167, glycine 173, glycine 174, lysine 206, leucine 208, glutamate 213, glycine 239, valine 240, histidine 241, glutamine 282, and glutamate 296. An ATP-grasp 1 domain is found at 131–325 (RETMIENNLP…LAYVSAKLAL (195 aa)). Residues glutamine 282, glutamate 296, and asparagine 298 each coordinate Mg(2+). Residues glutamine 282, glutamate 296, and asparagine 298 each contribute to the Mn(2+) site. The interval 400 to 548 (IGEPGVVGGK…LTYNGTEDDI (149 aa)) is oligomerization domain. A carbamoyl phosphate synthetic domain region spans residues 549 to 930 (EFSQGNKLLI…LKSWLSSMPN (382 aa)). An ATP-grasp 2 domain is found at 673–863 (SKLLDKLGIS…LINESMKAIF (191 aa)). ATP contacts are provided by arginine 709, lysine 748, isoleucine 750, glutamate 755, glycine 779, valine 780, histidine 781, serine 782, glutamine 822, and glutamate 834. The Mg(2+) site is built by glutamine 822, glutamate 834, and asparagine 836. Residues glutamine 822, glutamate 834, and asparagine 836 each contribute to the Mn(2+) site. Residues 930–1051 (NRIPNKNGIA…FEISEYGGGI (122 aa)) form the MGS-like domain. The segment at 931–1051 (RIPNKNGIAL…FEISEYGGGI (121 aa)) is allosteric domain.

Belongs to the CarB family. As to quaternary structure, composed of two chains; the small (or glutamine) chain promotes the hydrolysis of glutamine to ammonia, which is used by the large (or ammonia) chain to synthesize carbamoyl phosphate. Tetramer of heterodimers (alpha,beta)4. Requires Mg(2+) as cofactor. It depends on Mn(2+) as a cofactor.

The enzyme catalyses hydrogencarbonate + L-glutamine + 2 ATP + H2O = carbamoyl phosphate + L-glutamate + 2 ADP + phosphate + 2 H(+). It catalyses the reaction hydrogencarbonate + NH4(+) + 2 ATP = carbamoyl phosphate + 2 ADP + phosphate + 2 H(+). Its pathway is amino-acid biosynthesis; L-arginine biosynthesis; carbamoyl phosphate from bicarbonate: step 1/1. It participates in pyrimidine metabolism; UMP biosynthesis via de novo pathway; (S)-dihydroorotate from bicarbonate: step 1/3. Large subunit of the glutamine-dependent carbamoyl phosphate synthetase (CPSase). CPSase catalyzes the formation of carbamoyl phosphate from the ammonia moiety of glutamine, carbonate, and phosphate donated by ATP, constituting the first step of 2 biosynthetic pathways, one leading to arginine and/or urea and the other to pyrimidine nucleotides. The large subunit (synthetase) binds the substrates ammonia (free or transferred from glutamine from the small subunit), hydrogencarbonate and ATP and carries out an ATP-coupled ligase reaction, activating hydrogencarbonate by forming carboxy phosphate which reacts with ammonia to form carbamoyl phosphate. In Saccharolobus solfataricus (strain ATCC 35092 / DSM 1617 / JCM 11322 / P2) (Sulfolobus solfataricus), this protein is Carbamoyl phosphate synthase large chain.